A 300-amino-acid polypeptide reads, in one-letter code: Putative S-adenosyl-L-methionine-dependent methyltransferase MMAR_1058 (300 aa).

Residues aspartate 127 and 156-157 (DL) contribute to the S-adenosyl-L-methionine site.

It belongs to the UPF0677 family.

Functionally, exhibits S-adenosyl-L-methionine-dependent methyltransferase activity. This chain is Putative S-adenosyl-L-methionine-dependent methyltransferase MMAR_1058, found in Mycobacterium marinum (strain ATCC BAA-535 / M).